A 172-amino-acid chain; its full sequence is Outer-membrane lipoprotein carrier protein (172 aa).

The N-terminal stretch at 1–16 (MRIALLWVAFGALALA) is a signal peptide.

Belongs to the LolA family. In terms of assembly, monomer.

It localises to the periplasm. In terms of biological role, participates in the translocation of lipoproteins from the inner membrane to the outer membrane. Only forms a complex with a lipoprotein if the residue after the N-terminal Cys is not an aspartate (The Asp acts as a targeting signal to indicate that the lipoprotein should stay in the inner membrane). In Wolinella succinogenes (strain ATCC 29543 / DSM 1740 / CCUG 13145 / JCM 31913 / LMG 7466 / NCTC 11488 / FDC 602W) (Vibrio succinogenes), this protein is Outer-membrane lipoprotein carrier protein.